The primary structure comprises 348 residues: L-asparaginase 2 (348 aa).

The signal sequence occupies residues 1-22 (MEFFKKTALAALVMGFSGAALA). The Asparaginase/glutaminase domain occupies 24-348 (PNITILATGG…QQIQQIFNQY (325 aa)). Thr-34 serves as the catalytic O-isoaspartyl threonine intermediate. Substrate is bound by residues 80–81 (SQ) and 111–112 (TD). Cys-99 and Cys-127 form a disulfide bridge.

Belongs to the asparaginase 1 family. In terms of assembly, homotetramer.

The protein resides in the periplasm. The catalysed reaction is L-asparagine + H2O = L-aspartate + NH4(+). This Escherichia coli (strain K12) protein is L-asparaginase 2 (ansB).